Here is an 87-residue protein sequence, read N- to C-terminus: Class II metallothionein-like protein 1A (87 aa).

Belongs to the metallothionein superfamily. Type 15 family. Expressed in developing seeds.

In terms of biological role, metallothioneins have a high content of cysteine residues that bind various heavy metals. This chain is Class II metallothionein-like protein 1A (MT21A), found in Oryza sativa subsp. japonica (Rice).